The primary structure comprises 286 residues: Phosphatidylserine decarboxylase proenzyme (286 aa).

Catalysis depends on charge relay system; for autoendoproteolytic cleavage activity residues aspartate 91, histidine 148, and serine 251. Catalysis depends on serine 251, which acts as the Schiff-base intermediate with substrate; via pyruvic acid; for decarboxylase activity. Position 251 is a pyruvic acid (Ser); by autocatalysis (serine 251).

The protein belongs to the phosphatidylserine decarboxylase family. PSD-B subfamily. Prokaryotic type I sub-subfamily. Heterodimer of a large membrane-associated beta subunit and a small pyruvoyl-containing alpha subunit. Pyruvate is required as a cofactor. In terms of processing, is synthesized initially as an inactive proenzyme. Formation of the active enzyme involves a self-maturation process in which the active site pyruvoyl group is generated from an internal serine residue via an autocatalytic post-translational modification. Two non-identical subunits are generated from the proenzyme in this reaction, and the pyruvate is formed at the N-terminus of the alpha chain, which is derived from the carboxyl end of the proenzyme. The autoendoproteolytic cleavage occurs by a canonical serine protease mechanism, in which the side chain hydroxyl group of the serine supplies its oxygen atom to form the C-terminus of the beta chain, while the remainder of the serine residue undergoes an oxidative deamination to produce ammonia and the pyruvoyl prosthetic group on the alpha chain. During this reaction, the Ser that is part of the protease active site of the proenzyme becomes the pyruvoyl prosthetic group, which constitutes an essential element of the active site of the mature decarboxylase.

Its subcellular location is the cell membrane. The catalysed reaction is a 1,2-diacyl-sn-glycero-3-phospho-L-serine + H(+) = a 1,2-diacyl-sn-glycero-3-phosphoethanolamine + CO2. It functions in the pathway phospholipid metabolism; phosphatidylethanolamine biosynthesis; phosphatidylethanolamine from CDP-diacylglycerol: step 2/2. Its function is as follows. Catalyzes the formation of phosphatidylethanolamine (PtdEtn) from phosphatidylserine (PtdSer). This Marinobacter nauticus (strain ATCC 700491 / DSM 11845 / VT8) (Marinobacter aquaeolei) protein is Phosphatidylserine decarboxylase proenzyme.